Consider the following 242-residue polypeptide: Putative prolyl 4-hydroxylase (242 aa).

In terms of domain architecture, Fe2OG dioxygenase spans 128 to 238 (NAEDLQVVRY…KWIANLWFRE (111 aa)).

It belongs to the P4HA family. Requires Fe cation as cofactor. It depends on L-ascorbate as a cofactor.

The protein resides in the virion. The catalysed reaction is L-prolyl-[collagen] + 2-oxoglutarate + O2 = trans-4-hydroxy-L-prolyl-[collagen] + succinate + CO2. May catalyze the post-translational formation of 4-hydroxyproline in -Xaa-Pro-Gly- sequences in the 6 collagen-like proteins of Mimivirus. The protein is Putative prolyl 4-hydroxylase of Acanthamoeba polyphaga mimivirus (APMV).